The chain runs to 312 residues: DNA-directed RNA polymerase subunit alpha (312 aa).

The alpha N-terminal domain (alpha-NTD) stretch occupies residues 1–226 (MIEFEKPNIT…EHLDLFTDLT (226 aa)). Residues 244-312 (DHVLERTIEE…DLGLGLKNDK (69 aa)) form an alpha C-terminal domain (alpha-CTD) region.

This sequence belongs to the RNA polymerase alpha chain family. Homodimer. The RNAP catalytic core consists of 2 alpha, 1 beta, 1 beta' and 1 omega subunit. When a sigma factor is associated with the core the holoenzyme is formed, which can initiate transcription.

It carries out the reaction RNA(n) + a ribonucleoside 5'-triphosphate = RNA(n+1) + diphosphate. Functionally, DNA-dependent RNA polymerase catalyzes the transcription of DNA into RNA using the four ribonucleoside triphosphates as substrates. This is DNA-directed RNA polymerase subunit alpha from Streptococcus gordonii (strain Challis / ATCC 35105 / BCRC 15272 / CH1 / DL1 / V288).